The chain runs to 316 residues: 4-diphosphocytidyl-2-C-methyl-D-erythritol kinase (316 aa).

The active site involves Lys32. 126 to 136 is a binding site for ATP; sequence PVGAGLGGGSA. The active site involves Asp168.

This sequence belongs to the GHMP kinase family. IspE subfamily.

The enzyme catalyses 4-CDP-2-C-methyl-D-erythritol + ATP = 4-CDP-2-C-methyl-D-erythritol 2-phosphate + ADP + H(+). It functions in the pathway isoprenoid biosynthesis; isopentenyl diphosphate biosynthesis via DXP pathway; isopentenyl diphosphate from 1-deoxy-D-xylulose 5-phosphate: step 3/6. Catalyzes the phosphorylation of the position 2 hydroxy group of 4-diphosphocytidyl-2C-methyl-D-erythritol. In Bifidobacterium longum (strain DJO10A), this protein is 4-diphosphocytidyl-2-C-methyl-D-erythritol kinase.